The following is a 104-amino-acid chain: MAIVKVTDSDFDSKIESGVKLVDFWATWCGPCKMIAPVLEELAGDYDGKADILKLDVDENPSTAAKYEVMSIPTLIVFKDGEPVDKVVGFQPKENLAEVLDKHL.

In terms of domain architecture, Thioredoxin spans 2 to 104 (AIVKVTDSDF…NLAEVLDKHL (103 aa)). An intrachain disulfide couples Cys29 to Cys32.

It belongs to the thioredoxin family.

In terms of biological role, component of the thioredoxin-thioredoxin reductase system. Participates in various redox reactions through the reversible oxidation of its active center dithiol to a disulfide and catalyzes dithiol-disulfide exchange reactions. The polypeptide is Thioredoxin (trxA) (Staphylococcus epidermidis (strain ATCC 35984 / DSM 28319 / BCRC 17069 / CCUG 31568 / BM 3577 / RP62A)).